The chain runs to 1024 residues: Beta-galactosidase (1024 aa).

Substrate is bound by residues Asn100 and Asp198. Residue Asp198 participates in Na(+) binding. Glu414, His416, and Glu459 together coordinate Mg(2+). Substrate is bound by residues Glu459 and Glu535 to His538. The active-site Proton donor is the Glu459. The Nucleophile role is filled by Glu535. Asn595 is a Mg(2+) binding site. Positions 599 and 602 each coordinate Na(+). 2 residues coordinate substrate: Asn602 and Trp995.

This sequence belongs to the glycosyl hydrolase 2 family. Homotetramer. The cofactor is Mg(2+). It depends on Na(+) as a cofactor.

The catalysed reaction is Hydrolysis of terminal non-reducing beta-D-galactose residues in beta-D-galactosides.. In Vibrio cholerae serotype O1 (strain ATCC 39541 / Classical Ogawa 395 / O395), this protein is Beta-galactosidase.